The chain runs to 155 residues: Ribosome maturation factor RimP (155 aa).

The protein belongs to the RimP family.

The protein resides in the cytoplasm. Required for maturation of 30S ribosomal subunits. This chain is Ribosome maturation factor RimP, found in Parasynechococcus marenigrum (strain WH8102).